Reading from the N-terminus, the 65-residue chain is Defensin Cg-Defm (65 aa).

Positions 1–22 (MKVFVLLTLAVLLMVSADMAFA) are cleaved as a signal peptide. Beta-D-GlcNAc-(1-&gt;4)-Mur2Ac(oyl-L-Ala-gamma-D-Glu-L-Lys-D-Ala-D-Ala)-di-trans,octa-cis-undecaprenyl diphosphate-binding residues include phenylalanine 24, glycine 25, and cysteine 26. Cystine bridges form between cysteine 26/cysteine 47, cysteine 33/cysteine 56, cysteine 37/cysteine 58, and cysteine 42/cysteine 61. Positions 27–30 (PGNQ) are binds to membrane interface. Histidine 36 lines the beta-D-GlcNAc-(1-&gt;4)-Mur2Ac(oyl-L-Ala-gamma-D-Glu-L-Lys-D-Ala-D-Ala)-di-trans,octa-cis-undecaprenyl diphosphate pocket. The segment at 48 to 54 (DAATLWL) is binds to membrane interface. Cysteine 56 contributes to the beta-D-GlcNAc-(1-&gt;4)-Mur2Ac(oyl-L-Ala-gamma-D-Glu-L-Lys-D-Ala-D-Ala)-di-trans,octa-cis-undecaprenyl diphosphate binding site.

It belongs to the invertebrate defensin family. As to expression, expressed in the mantle. Low or no expression in most of the organs analyzed, including hemocytes, heart, digestive gland, and gills.

The protein localises to the secreted. Its subcellular location is the target cell membrane. Antibacterial peptide mostly active against Gram-positive bacteria (M.lysodeikticus, S.aureus, and the marine bacteria, B.stationis, and M.maritypicum). It acts by selectively inhibiting peptidoglycan biosynthesis through complex formation with the cell wall precursor lipid II (1:1 molar ratio) thus inhibiting cell wall synthesis. It does not disrupt cell membranes. Is noticeably more potent than Cg-Defh1. It shows no or limited activities against Gram-negative bacteria and filamentous fungi. The sequence is that of Defensin Cg-Defm from Magallana gigas (Pacific oyster).